Consider the following 178-residue polypeptide: Arginine repressor (178 aa).

The tract at residues 1 to 20 is disordered; the sequence is MTEAQEPEYGGPSVPQTRTA.

The protein belongs to the ArgR family.

Its subcellular location is the cytoplasm. It participates in amino-acid biosynthesis; L-arginine biosynthesis [regulation]. In terms of biological role, regulates arginine biosynthesis genes. The polypeptide is Arginine repressor (Streptomyces griseus subsp. griseus (strain JCM 4626 / CBS 651.72 / NBRC 13350 / KCC S-0626 / ISP 5235)).